Here is a 227-residue protein sequence, read N- to C-terminus: PKHD-type hydroxylase Caul_0045 (227 aa).

The region spanning 78–178 (TILSPLFNRY…RTASFFWIQS (101 aa)) is the Fe2OG dioxygenase domain. Residues His-96, Asp-98, and His-159 each coordinate Fe cation. Arg-169 contacts 2-oxoglutarate.

Fe(2+) is required as a cofactor. L-ascorbate serves as cofactor.

In Caulobacter sp. (strain K31), this protein is PKHD-type hydroxylase Caul_0045.